A 247-amino-acid polypeptide reads, in one-letter code: Coproheme decarboxylase (247 aa).

Fe-coproporphyrin III is bound by residues R129, 143 to 147 (YPMDK), H170, Q183, and S221. Y143 is a catalytic residue.

The protein belongs to the ChdC family. Type 1 subfamily. Fe-coproporphyrin III is required as a cofactor.

It catalyses the reaction Fe-coproporphyrin III + 2 H2O2 + 2 H(+) = heme b + 2 CO2 + 4 H2O. It carries out the reaction Fe-coproporphyrin III + H2O2 + H(+) = harderoheme III + CO2 + 2 H2O. The enzyme catalyses harderoheme III + H2O2 + H(+) = heme b + CO2 + 2 H2O. It functions in the pathway porphyrin-containing compound metabolism; protoheme biosynthesis. In terms of biological role, involved in coproporphyrin-dependent heme b biosynthesis. Catalyzes the decarboxylation of Fe-coproporphyrin III (coproheme) to heme b (protoheme IX), the last step of the pathway. The reaction occurs in a stepwise manner with a three-propionate intermediate. The chain is Coproheme decarboxylase from Bacillus cereus (strain B4264).